Here is a 408-residue protein sequence, read N- to C-terminus: Dicamba O-demethylase 1, ferredoxin reductase component (408 aa).

G14, K49, V82, R130, D279, and V298 together coordinate FAD.

It belongs to the FAD-dependent oxidoreductase family. Monomer. The dicamba O-demethylase multicomponent enzyme system is composed of an oxygenase component (DdmC) and an electron transfer component formed by a ferredoxin reductase (DdmA1) and a ferredoxin (DdmB). In vitro, dicamba O-demethylase assays in which DdmA2 is substituted for DdmA1 demonstrate that the two enzymes possess nearly identical activities. FAD is required as a cofactor.

It catalyses the reaction 2 reduced [2Fe-2S]-[ferredoxin] + NAD(+) + H(+) = 2 oxidized [2Fe-2S]-[ferredoxin] + NADH. Its function is as follows. Component of the dicamba O-demethylase multicomponent enzyme system involved in the degradation of the herbicide dicamba. In vitro, catalyzes the transfers of electrons from ferredoxin (DdmB) to NADH. Both NADH and NADPH support enzyme activity, with NADH being markedly more effective than NADPH. The chain is Dicamba O-demethylase 1, ferredoxin reductase component from Stenotrophomonas maltophilia (Pseudomonas maltophilia).